A 91-amino-acid chain; its full sequence is Long neurotoxin OH-37 (91 aa).

Positions 1–21 (MKTLLLTLVVMTIVCLDLGYS) are cleaved as a signal peptide. 5 cysteine pairs are disulfide-bonded: C24–C41, C34–C62, C47–C51, C66–C77, and C78–C83.

It belongs to the three-finger toxin family. Long-chain subfamily. Type II alpha-neurotoxin sub-subfamily. As to expression, expressed by the venom gland.

It is found in the secreted. Functionally, binds with high affinity to muscular (alpha-1/CHRNA1) and neuronal (alpha-7/CHRNA7) nicotinic acetylcholine receptor (nAChR) and inhibits acetylcholine from binding to the receptor, thereby impairing neuromuscular and neuronal transmission. This Ophiophagus hannah (King cobra) protein is Long neurotoxin OH-37.